The chain runs to 309 residues: HPr kinase/phosphorylase (309 aa).

Active-site residues include His-138 and Lys-159. 153 to 160 (GQSGVGKS) provides a ligand contact to ATP. A Mg(2+)-binding site is contributed by Ser-160. Asp-177 (proton acceptor; for phosphorylation activity. Proton donor; for dephosphorylation activity) is an active-site residue. The important for the catalytic mechanism of both phosphorylation and dephosphorylation stretch occupies residues 201-210 (LEIRGLGIIN). Residue Glu-202 coordinates Mg(2+). The active site involves Arg-243. Positions 264-269 (PVRPGR) are important for the catalytic mechanism of dephosphorylation.

Belongs to the HPrK/P family. Homohexamer. The cofactor is Mg(2+).

It catalyses the reaction [HPr protein]-L-serine + ATP = [HPr protein]-O-phospho-L-serine + ADP + H(+). The enzyme catalyses [HPr protein]-O-phospho-L-serine + phosphate + H(+) = [HPr protein]-L-serine + diphosphate. Its function is as follows. Catalyzes the ATP- as well as the pyrophosphate-dependent phosphorylation of a specific serine residue in HPr, a phosphocarrier protein of the phosphoenolpyruvate-dependent sugar phosphotransferase system (PTS). HprK/P also catalyzes the pyrophosphate-producing, inorganic phosphate-dependent dephosphorylation (phosphorolysis) of seryl-phosphorylated HPr (P-Ser-HPr). The two antagonistic activities of HprK/P are regulated by several intracellular metabolites, which change their concentration in response to the absence or presence of rapidly metabolisable carbon sources (glucose, fructose, etc.) in the growth medium. Also phosphorylates/dephosphorylates the HPr-like catabolite repression protein crh on a specific serine residue. Therefore, by controlling the phosphorylation state of HPr and crh, HPrK/P is a sensor enzyme that plays a major role in the regulation of carbon metabolism and sugar transport: it mediates carbon catabolite repression (CCR), and regulates PTS-catalyzed carbohydrate uptake and inducer exclusion. This is HPr kinase/phosphorylase from Bacillus mycoides (strain KBAB4) (Bacillus weihenstephanensis).